The following is a 62-amino-acid chain: Large ribosomal subunit protein bL28 (62 aa).

Residues 1-26 (MARKCYVTGKSPKSGNNRSHALNKTK) are disordered. Polar residues predominate over residues 11–20 (SPKSGNNRSH).

Belongs to the bacterial ribosomal protein bL28 family.

The chain is Large ribosomal subunit protein bL28 from Exiguobacterium sp. (strain ATCC BAA-1283 / AT1b).